A 411-amino-acid polypeptide reads, in one-letter code: Short chain dehydrogenase ausT (411 aa).

The NADP(+) site is built by Asp-105, Gln-137, Tyr-249, and Arg-253. The Proton donor role is filled by Tyr-249. The active-site Proton donor is the Tyr-263.

This sequence belongs to the short-chain dehydrogenases/reductases (SDR) family.

Its pathway is secondary metabolite biosynthesis; terpenoid biosynthesis. In terms of biological role, short chain dehydrogenase; part of the gene cluster that mediates the biosynthesis of calidodehydroaustin, a fungal meroterpenoid. The first step of the pathway is the synthesis of 3,5-dimethylorsellinic acid by the polyketide synthase ausA. 3,5-dimethylorsellinic acid is then prenylated by the polyprenyl transferase ausN. Further epoxidation by the FAD-dependent monooxygenase ausM and cyclization by the probable terpene cyclase ausL lead to the formation of protoaustinoid A. Protoaustinoid A is then oxidized to spiro-lactone preaustinoid A3 by the combined action of the FAD-binding monooxygenases ausB and ausC, and the dioxygenase ausE. Acid-catalyzed keto-rearrangement and ring contraction of the tetraketide portion of preaustinoid A3 by ausJ lead to the formation of preaustinoid A4. The aldo-keto reductase ausK, with the help of ausH, is involved in the next step by transforming preaustinoid A4 into isoaustinone which is in turn hydroxylated by the P450 monooxygenase ausI to form austinolide. The cytochrome P450 monooxygenase ausG modifies austinolide to austinol. Austinol is further acetylated to austin by the O-acetyltransferase ausP, which spontaneously changes to dehydroaustin. The cytochrome P450 monooxygenase ausR then converts dehydroaustin is into 7-dehydrodehydroaustin. The hydroxylation catalyzed by ausR permits the O-acetyltransferase ausQ to add an additional acetyl group to the molecule, leading to the formation of acetoxydehydroaustin. The short chain dehydrogenase ausT catalyzes the reduction of the double bond present between carbon atoms 1 and 2 to convert 7-dehydrodehydroaustin into 1,2-dihydro-7-hydroxydehydroaustin. AusQ catalyzes not only an acetylation reaction but also the addition of the PKS ausV diketide product to 1,2-dihydro-7-hydroxydehydroaustin, forming precalidodehydroaustin. Finally, the iron/alpha-ketoglutarate-dependent dioxygenase converts precalidodehydroaustin into calidodehydroaustin. This is Short chain dehydrogenase ausT from Aspergillus calidoustus.